The following is a 63-amino-acid chain: Lysis protein (63 aa).

The chain crosses the membrane as a helical span at residues Leu21–Trp43.

Belongs to the Leviviricetes lysis protein family.

It localises to the host cell inner membrane. Its subcellular location is the host cell outer membrane. Its function is as follows. Induces the formation of specific membrane adhesion sites between the inner and outer membranes, apparently leading to host cell lysis. Lysis may be performed via activation of host murein hydrolases. The sequence is that of Lysis protein from Escherichia coli (Bacteriophage JP34).